The primary structure comprises 326 residues: Vitamin B12 import system permease protein BtuC (326 aa).

The next 9 helical transmembrane spans lie at 17-39 (LSLS…QWIA), 59-81 (RTLA…QALF), 88-107 (PGLL…AVLL), 111-133 (QLAG…LILL), 146-168 (LLAG…YFST), 188-205 (WQQS…IWIC), 242-264 (MVGV…PHIL), 274-296 (VLLP…VARL), and 303-322 (LPIG…WLLL).

It belongs to the binding-protein-dependent transport system permease family. FecCD subfamily. The complex is composed of two ATP-binding proteins (BtuD), two transmembrane proteins (BtuC) and a solute-binding protein (BtuF).

The protein resides in the cell inner membrane. Part of the ABC transporter complex BtuCDF involved in vitamin B12 import. Involved in the translocation of the substrate across the membrane. This is Vitamin B12 import system permease protein BtuC from Salmonella paratyphi A (strain ATCC 9150 / SARB42).